Here is a 1067-residue protein sequence, read N- to C-terminus: Probable importin subunit beta-4 (1067 aa).

Residues 27 to 94 form the Importin N-terminal domain; the sequence is ATRALETKYL…RSNLLDITLK (68 aa). HEAT repeat units follow at residues 159-196, 379-416, 420-457, 591-633, 890-927, and 1013-1050; these read KLLL…VLES, GNLP…EIPT, KHHA…GLDK, PFLE…SVET, PFTR…FSTE, and QHLG…EIAP.

The protein belongs to the importin beta family.

It is found in the cytoplasm. Its subcellular location is the nucleus. The protein localises to the nucleus envelope. In terms of biological role, required for nuclear protein import, its predominant substrate seems to be ribosomal proteins. Binds to nucleoporins and the GTP-bound form of gsp1 (Ran). This Schizosaccharomyces pombe (strain 972 / ATCC 24843) (Fission yeast) protein is Probable importin subunit beta-4 (kap123).